The following is a 91-amino-acid chain: UPF0213 protein NMC1807 (91 aa).

The GIY-YIG domain occupies 4 to 83; the sequence is SNWSVYLILC…AAQKRQLWEQ (80 aa).

Belongs to the UPF0213 family.

In Neisseria meningitidis serogroup C / serotype 2a (strain ATCC 700532 / DSM 15464 / FAM18), this protein is UPF0213 protein NMC1807.